Here is a 426-residue protein sequence, read N- to C-terminus: Enolase (426 aa).

Gln-163 serves as a coordination point for (2R)-2-phosphoglycerate. Glu-205 acts as the Proton donor in catalysis. Mg(2+) contacts are provided by Asp-242, Glu-283, and Asp-310. (2R)-2-phosphoglycerate-binding residues include Lys-335, Arg-364, Ser-365, and Lys-386. Lys-335 functions as the Proton acceptor in the catalytic mechanism.

It belongs to the enolase family. Mg(2+) serves as cofactor.

The protein resides in the cytoplasm. The protein localises to the secreted. Its subcellular location is the cell surface. It catalyses the reaction (2R)-2-phosphoglycerate = phosphoenolpyruvate + H2O. The protein operates within carbohydrate degradation; glycolysis; pyruvate from D-glyceraldehyde 3-phosphate: step 4/5. Catalyzes the reversible conversion of 2-phosphoglycerate (2-PG) into phosphoenolpyruvate (PEP). It is essential for the degradation of carbohydrates via glycolysis. The protein is Enolase of Beutenbergia cavernae (strain ATCC BAA-8 / DSM 12333 / CCUG 43141 / JCM 11478 / NBRC 16432 / NCIMB 13614 / HKI 0122).